The chain runs to 490 residues: Probable cytosol aminopeptidase (490 aa).

Positions 258 and 263 each coordinate Mn(2+). The active site involves lysine 270. Positions 282, 341, and 343 each coordinate Mn(2+). The active site involves arginine 345.

Belongs to the peptidase M17 family. Requires Mn(2+) as cofactor.

It is found in the cytoplasm. The catalysed reaction is Release of an N-terminal amino acid, Xaa-|-Yaa-, in which Xaa is preferably Leu, but may be other amino acids including Pro although not Arg or Lys, and Yaa may be Pro. Amino acid amides and methyl esters are also readily hydrolyzed, but rates on arylamides are exceedingly low.. It carries out the reaction Release of an N-terminal amino acid, preferentially leucine, but not glutamic or aspartic acids.. In terms of biological role, presumably involved in the processing and regular turnover of intracellular proteins. Catalyzes the removal of unsubstituted N-terminal amino acids from various peptides. This Microcystis aeruginosa (strain NIES-843 / IAM M-2473) protein is Probable cytosol aminopeptidase.